The following is a 526-amino-acid chain: Nuclear pore glycoprotein p62 (526 aa).

Ser-2 is modified (N-acetylserine). A run of 4 repeats spans residues 6–7 (FG), 46–47 (FG), 78–79 (FG), and 115–116 (FG). The tract at residues 6–144 (FGGTGAPAGG…GTAPTGFVFG (139 aa)) is 5 X 2 AA repeats of F-G. Residues 43–82 (GFNFGTPSQPAATTPSTSLFSLTTQTPTTQTPGFNFGTTP) form a disordered region. A compositionally biased stretch (low complexity) spans 46–81 (FGTPSQPAATTPSTSLFSLTTQTPTTQTPGFNFGTT). The span at 128-137 (SGSTSNQGTA) shows a compositional bias: polar residues. The tract at residues 128 to 148 (SGSTSNQGTAPTGFVFGSSTT) is disordered. The stretch at 143-144 (FG) is repeat 5. The interval 332–462 (MTYAQLESLI…QDLKDIIEHL (131 aa)) is required for centrosome localization. Residues 332-462 (MTYAQLESLI…QDLKDIIEHL (131 aa)) adopt a coiled-coil conformation. Thr-377 carries O-linked (GlcNAc) threonine glycosylation. 2 positions are modified to phosphoserine: Ser-412 and Ser-422. Ser-472 carries O-linked (GlcNAc) serine glycosylation.

It belongs to the nucleoporin NSP1/NUP62 family. As to quaternary structure, component of the p62 complex, a complex at least composed of NUP62, NUP54, and NUP58. Interacts with NUP88. Interacts with NUTF2. Interacts with HIKESHI. Interacts with OSBPL8. Interacts with CAPG. Interacts with SAS6 and TUBG1 at the centrosome. Interacts with MCM3AP. O-glycosylated. In terms of processing, the inner channel of the NPC has a different redox environment from the cytoplasm and allows the formation of interchain disulfide bonds between some nucleoporins, the significant increase of these linkages upon oxidative stress reduces the permeability of the NPC.

It localises to the nucleus. The protein localises to the nuclear pore complex. Its subcellular location is the cytoplasm. The protein resides in the cytoskeleton. It is found in the spindle pole. It localises to the nucleus envelope. The protein localises to the microtubule organizing center. Its subcellular location is the centrosome. Essential component of the nuclear pore complex. The N-terminal is probably involved in nucleocytoplasmic transport. The C-terminal is involved in protein-protein interaction probably via coiled-coil formation, promotes its association with centrosomes and may function in anchorage of p62 to the pore complex. Plays a role in mitotic cell cycle progression by regulating centrosome segregation, centriole maturation and spindle orientation. It might be involved in protein recruitment to the centrosome after nuclear breakdown. This is Nuclear pore glycoprotein p62 (Nup62) from Mus musculus (Mouse).